We begin with the raw amino-acid sequence, 2122 residues long: Unique GC organizer UGO (2122 aa).

5 consecutive transmembrane segments (helical) span residues 19–39, 50–70, 82–102, 115–135, and 145–165; these read FAVAVALLDLALYVLIGTNSL, LFGMITSALIFIIALCGFVIV, TYIMPVLIICNIASVFYMQLI, VLTFLITGYPYVWLVAFVLIG, and VVCSVSLGSSCPPSVWVDVGL. 13 disordered regions span residues 337–403, 422–532, 565–591, 627–762, 785–815, 848–870, 903–949, 999–1046, 1068–1308, 1328–1368, 1515–1540, 1560–1608, and 1639–1727; these read AALH…HRSA, FRGL…GPFV, DLRESRERTARAASHDTHAAADDSGLQ, HRRG…GRAN, HAASSEEERPVRPARHSWRRGSGDSRECSAS, MSRRRRREGKSRPHASSVSRAER, SKEG…ASAN, RNET…LHSR, PSDL…HEAV, AGLS…SEEE, ANSSTAVSSSLPDSTAWQGSGAAASA, AAEH…TPHT, and QGLG…TFFG. The span at 363–374 shows a compositional bias: polar residues; it reads RSNTLRGCSGQV. Basic and acidic residues-rich tracts occupy residues 503–525, 565–585, and 632–645; these read LRMDEQSGDADKASSDVSRDPAK, DLRESRERTARAASHDTHAAA, and GARDGELVFERGEP. Over residues 672–687 the composition is skewed to basic residues; that stretch reads RLSRSRRHKTRTYRRG. Residues 690–699 show a composition bias toward low complexity; that stretch reads SDGTTAGTSD. The span at 707–720 shows a compositional bias: acidic residues; that stretch reads LEDEGSDSGQESES. Residues 725-735 show a composition bias toward basic residues; the sequence is RRRMRSSRNRR. Over residues 741–750 the composition is skewed to low complexity; the sequence is EDSSSGTSVR. The segment covering 751–760 has biased composition (basic and acidic residues); sequence SEGRHCREGR. N762 carries N-linked (GlcNAc...) asparagine glycosylation. Positions 848–860 are enriched in basic residues; the sequence is MSRRRRREGKSRP. 2 stretches are compositionally biased toward polar residues: residues 999-1011 and 1072-1097; these read RNETEMTASSPAT and SLFTTPPASPSSLNEVQASRSSSARI. N-linked (GlcNAc...) asparagine glycosylation is present at N1000. N1165 is a glycosylation site (N-linked (GlcNAc...) asparagine). Residues 1220 to 1261 are compositionally biased toward basic and acidic residues; it reads SREDLVGEADSHVSPEKEVFVSSRREKREEQVPRSRREERRD. Residues 1262 to 1276 are compositionally biased toward basic residues; sequence RRGRRWRRGRRRRKA. Basic and acidic residues-rich tracts occupy residues 1277–1289 and 1345–1359; these read RECSETEERRDSS and GDMRERQIYETHSDG. The span at 1515 to 1527 shows a compositional bias: polar residues; that stretch reads ANSSTAVSSSLPD. N-linked (GlcNAc...) asparagine glycosylation is present at N1516. Low complexity-rich tracts occupy residues 1528–1540 and 1597–1608; these read STAWQGSGAAASA and TQTPQTPQTPHT. Residues 1684-1693 show a composition bias toward polar residues; sequence LSATPSTRLQ. 5 helical membrane-spanning segments follow: residues 1859-1879, 1956-1976, 1989-2009, 2017-2037, and 2040-2060; these read VAWLLFLICFYATAFHGLLRL, MLALSFLQFVYAVFDNTWHLI, IIPASPSLEIAAVQTVYILAV, IFLLYIITYIIIFFVALPPGV, and VQLFTISMAGWLFTCVGGQLF. The tract at residues 2102-2122 is disordered; it reads DEGSEDEVSMGSGHLVGDRSA.

As to quaternary structure, interacts with guanylate cyclase GC; the interaction regulates guanylate cyclase GC trafficking and catalytic activity.

Its subcellular location is the cell membrane. Functionally, in tachyzoites, required for the cellular trafficking of guanylate cyclase GC to the cell membrane and for GC guanylate cyclase activity. The polypeptide is Unique GC organizer UGO (Toxoplasma gondii (strain ATCC 50853 / GT1)).